The following is a 123-amino-acid chain: Histone H2B (123 aa).

The interval 1–30 (MPPKTSGKAAKKAGKAQKNITKTDKKKKRR) is disordered. Pro2 carries the post-translational modification N-methylproline; partial. Residue Lys44 is modified to N6-succinyllysine. Ser110 is a glycosylation site (O-linked (GlcNAc) serine). N6-succinyllysine occurs at positions 114 and 118. A Glycyl lysine isopeptide (Lys-Gly) (interchain with G-Cter in ubiquitin) cross-link involves residue Lys118.

Belongs to the histone H2B family. In terms of assembly, the nucleosome is a histone octamer containing two molecules each of H2A, H2B, H3 and H4 assembled in one H3-H4 heterotetramer and two H2A-H2B heterodimers. The octamer wraps approximately 147 bp of DNA. In terms of processing, phosphorylated by the catalytic component of the Dbf4-dependent kinase (DDK) complex Cdc7. Post-translationally, monoubiquitination of Lys-118 by Bre1 gives a specific tag for epigenetic transcriptional activation and is also prerequisite for histone H3 'Lys-4' and 'Lys-79' methylation. Deubiquitination of Lys-118 by the SAGA complex is involved in activating transcription of a large subset of genes. Methylation at Pro-2 increases upon heat shock. In terms of processing, glcNAcylation at Ser-110 promotes monoubiquitination of Lys-118. It fluctuates in response to extracellular glucose, and associates with transcribed genes.

The protein localises to the nucleus. Its subcellular location is the chromosome. Functionally, core component of nucleosome. Nucleosomes wrap and compact DNA into chromatin, limiting DNA accessibility to the cellular machineries which require DNA as a template. Histones thereby play a central role in transcription regulation, DNA repair, DNA replication and chromosomal stability. DNA accessibility is regulated via a complex set of post-translational modifications of histones, also called histone code, and nucleosome remodeling. This chain is Histone H2B (His2B), found in Drosophila yakuba (Fruit fly).